The primary structure comprises 395 residues: Chorismate synthase (395 aa).

The NADP(+) site is built by R40 and R46. Positions 99–120 are disordered; it reads PREGRNAPLSRPRPGHADLTGM. FMN contacts are provided by residues 134 to 136, 256 to 257, G301, 316 to 320, and R342; these read RSS, QA, and KPIPS.

Belongs to the chorismate synthase family. As to quaternary structure, homotetramer. It depends on FMNH2 as a cofactor.

It carries out the reaction 5-O-(1-carboxyvinyl)-3-phosphoshikimate = chorismate + phosphate. Its pathway is metabolic intermediate biosynthesis; chorismate biosynthesis; chorismate from D-erythrose 4-phosphate and phosphoenolpyruvate: step 7/7. Catalyzes the anti-1,4-elimination of the C-3 phosphate and the C-6 proR hydrogen from 5-enolpyruvylshikimate-3-phosphate (EPSP) to yield chorismate, which is the branch point compound that serves as the starting substrate for the three terminal pathways of aromatic amino acid biosynthesis. This reaction introduces a second double bond into the aromatic ring system. The protein is Chorismate synthase of Bifidobacterium longum (strain DJO10A).